The primary structure comprises 147 residues: Large ribosomal subunit protein uL15 (147 aa).

Residues 1–42 (MTIKLHHLRPAPGAKTDKTRVGRGEGSKGKTAGRGTKGTKAR) form a disordered region. The segment covering 15–28 (KTDKTRVGRGEGSK) has biased composition (basic and acidic residues).

It belongs to the universal ribosomal protein uL15 family. In terms of assembly, part of the 50S ribosomal subunit.

In terms of biological role, binds to the 23S rRNA. The polypeptide is Large ribosomal subunit protein uL15 (Nocardia farcinica (strain IFM 10152)).